Reading from the N-terminus, the 245-residue chain is 1-(5-phosphoribosyl)-5-[(5-phosphoribosylamino)methylideneamino] imidazole-4-carboxamide isomerase 1 (245 aa).

Catalysis depends on Asp-7, which acts as the Proton acceptor. Catalysis depends on Asp-129, which acts as the Proton donor.

The protein belongs to the HisA/HisF family.

It is found in the cytoplasm. The catalysed reaction is 1-(5-phospho-beta-D-ribosyl)-5-[(5-phospho-beta-D-ribosylamino)methylideneamino]imidazole-4-carboxamide = 5-[(5-phospho-1-deoxy-D-ribulos-1-ylimino)methylamino]-1-(5-phospho-beta-D-ribosyl)imidazole-4-carboxamide. It functions in the pathway amino-acid biosynthesis; L-histidine biosynthesis; L-histidine from 5-phospho-alpha-D-ribose 1-diphosphate: step 4/9. This is 1-(5-phosphoribosyl)-5-[(5-phosphoribosylamino)methylideneamino] imidazole-4-carboxamide isomerase 1 (hisA1) from Photorhabdus laumondii subsp. laumondii (strain DSM 15139 / CIP 105565 / TT01) (Photorhabdus luminescens subsp. laumondii).